Consider the following 414-residue polypeptide: MALISLAIDYKKSPIEVRSEFALSGLDVSMLYRSILAIDNVVHAVILSTCNRTEVYLEISDLIVVDDILVWWQGYVRNPNYKIKDYFKLRQGTEVIMHLMKLACGLESMVLGEPQILGQVKDSYTLSKKNHAIGKELDRVFQKVFATAKRVRSETRIGYCPVSVAFSAITLAKRQLDNISSKNVLIIGAGQTGELLFRHVTALAPKQIMLANRTIEKAQKITSVFRNASAHYLSELPQLIKKADIIIAAVNVLEYIVTCKYVGDKPRVFIDISIPQALDPKLGELEQNVYYCVDDINAVIEDNKDKRKYESSKAQKIIVKSLEEYLEKEKAIISNSAIKELFQKADGLVDLSLEKSLAKIRNGKDAEEIIKRFAYEIKKKVLHYPVVGMKEASKQGRSDCLVCMKRMFGLNVEK.

Substrate contacts are provided by residues T49–R52, S108, E113–Q115, and Q119. C50 acts as the Nucleophile in catalysis. G188–G193 serves as a coordination point for NADP(+).

This sequence belongs to the glutamyl-tRNA reductase family. As to quaternary structure, homodimer.

The enzyme catalyses (S)-4-amino-5-oxopentanoate + tRNA(Glu) + NADP(+) = L-glutamyl-tRNA(Glu) + NADPH + H(+). It participates in porphyrin-containing compound metabolism; protoporphyrin-IX biosynthesis; 5-aminolevulinate from L-glutamyl-tRNA(Glu): step 1/2. Its function is as follows. Catalyzes the NADPH-dependent reduction of glutamyl-tRNA(Glu) to glutamate 1-semialdehyde (GSA). The polypeptide is Glutamyl-tRNA reductase (Francisella tularensis subsp. holarctica (strain FTNF002-00 / FTA)).